A 121-amino-acid polypeptide reads, in one-letter code: Small ribosomal subunit protein uS13 (121 aa).

The interval 91-121 (HKRGLPVRGQRTRTNARTRKGPRRAAASLKK) is disordered.

The protein belongs to the universal ribosomal protein uS13 family. As to quaternary structure, part of the 30S ribosomal subunit. Forms a loose heterodimer with protein S19. Forms two bridges to the 50S subunit in the 70S ribosome.

Functionally, located at the top of the head of the 30S subunit, it contacts several helices of the 16S rRNA. In the 70S ribosome it contacts the 23S rRNA (bridge B1a) and protein L5 of the 50S subunit (bridge B1b), connecting the 2 subunits; these bridges are implicated in subunit movement. Contacts the tRNAs in the A and P-sites. The sequence is that of Small ribosomal subunit protein uS13 from Bordetella avium (strain 197N).